Here is a 169-residue protein sequence, read N- to C-terminus: uncharacterized protein (169 aa).

In terms of domain architecture, Nudix hydrolase spans 32–162; that stretch reads CNFRVVNSFV…EPAKSDLIKL (131 aa). Residues 69–91 carry the Nudix box motif; that stretch reads GGHVESGETYEDALQRELEEELN. Residues Glu-85 and Glu-89 each coordinate Mg(2+).

This sequence belongs to the Nudix hydrolase family. Mg(2+) is required as a cofactor.

This is an uncharacterized protein from Nostoc sp. (strain PCC 7120 / SAG 25.82 / UTEX 2576).